A 1065-amino-acid chain; its full sequence is WD repeat-containing protein on Y chromosome (1065 aa).

WD repeat units follow at residues 153 to 197 (EEVT…IRTA), 326 to 365 (RVPLGVSTFFVAESHNIVVTGGPDTFVRIWDVYIPTEPSA), 369 to 408 (GHNGGIVMVFVQPEENKVYSVDYQKIIKVWDLQEHTLLQT), 459 to 498 (THAAPVSVVLYNRLFRNIVTCGLDSYIIVWDPWSGRRKII), 511 to 550 (IIDIEITAATFDPLEQFLLTGARDGTLKIWNYNNAVVVRN), 598 to 638 (FHTD…RRYS), 745 to 784 (KTGDCVLTMCTDRKNRYIYTGTAFGYIKVWHIVNYCVPEA), and 828 to 867 (AHLKAINSIAFINLPKIVFSGSHDYSCRLWTQGGRYLGTL). Residues 915 to 925 (PAKRAEVKAPE) show a composition bias toward basic and acidic residues. Disordered regions lie at residues 915–936 (PAKRAEVKAPEDRDEETAQTDD) and 1024–1065 (GSAL…QQSE). The segment covering 926–936 (DRDEETAQTDD) has biased composition (acidic residues).

The sequence is that of WD repeat-containing protein on Y chromosome from Drosophila persimilis (Fruit fly).